A 238-amino-acid chain; its full sequence is Sugar fermentation stimulation protein homolog (238 aa).

It belongs to the SfsA family.

The chain is Sugar fermentation stimulation protein homolog from Vibrio parahaemolyticus serotype O3:K6 (strain RIMD 2210633).